A 103-amino-acid chain; its full sequence is Phorbol-12-myristate-13-acetate-induced protein 1 (103 aa).

2 consecutive short sequence motifs (BH3) follow at residues 27–35 and 78–86; these read LRKIGDKVY and LRRIGDKVN. The segment at 90 to 99 is required for mitochondrial location; the sequence is KLLNLISKLF.

The protein belongs to the PMAIP1 family. In terms of assembly, interacts with MCL1. Interacts with BCL2A1. Interacts with BAX. Interacts with BCL2L10. Detected in thymocytes after irradiation with X-rays. Not detectable in untreated thymocytes (at protein level). Detected in embryonic neural precursor cells of the telencephalon Constitutively expressed at low levels in adult brain, testis, thymus, spleen, lung and kidney.

It localises to the mitochondrion. Functionally, promotes activation of caspases and apoptosis. Promotes mitochondrial membrane changes and efflux of apoptogenic proteins from the mitochondria. Contributes to p53/TP53-dependent apoptosis after radiation exposure. Promotes proteasomal degradation of MCL1. Competes with BIM/BCL2L11 for binding to MCL1 and can displace BIM/BCL2L11 from its binding site on MCL1. Competes with BAK1 for binding to MCL1 and can displace BAK1 from its binding site on MCL1. The protein is Phorbol-12-myristate-13-acetate-induced protein 1 (Pmaip1) of Mus musculus (Mouse).